A 209-amino-acid polypeptide reads, in one-letter code: Holliday junction branch migration complex subunit RuvA (209 aa).

Positions 1 to 64 (MIGKLKGLVD…EDSIKLYGFA (64 aa)) are domain I. The interval 65–143 (SETEREWFRL…ALGASLHTLA (79 aa)) is domain II. The tract at residues 144-154 (GAGSEGAGVEA) is flexible linker. Residues 155–209 (PASGAVSDAISVLVNLGFGRSQAAVAVAASSKALGSGAGAGDLAKRALQELAQSG) are domain III.

Belongs to the RuvA family. Homotetramer. Forms an RuvA(8)-RuvB(12)-Holliday junction (HJ) complex. HJ DNA is sandwiched between 2 RuvA tetramers; dsDNA enters through RuvA and exits via RuvB. An RuvB hexamer assembles on each DNA strand where it exits the tetramer. Each RuvB hexamer is contacted by two RuvA subunits (via domain III) on 2 adjacent RuvB subunits; this complex drives branch migration. In the full resolvosome a probable DNA-RuvA(4)-RuvB(12)-RuvC(2) complex forms which resolves the HJ.

The protein resides in the cytoplasm. The RuvA-RuvB-RuvC complex processes Holliday junction (HJ) DNA during genetic recombination and DNA repair, while the RuvA-RuvB complex plays an important role in the rescue of blocked DNA replication forks via replication fork reversal (RFR). RuvA specifically binds to HJ cruciform DNA, conferring on it an open structure. The RuvB hexamer acts as an ATP-dependent pump, pulling dsDNA into and through the RuvAB complex. HJ branch migration allows RuvC to scan DNA until it finds its consensus sequence, where it cleaves and resolves the cruciform DNA. The sequence is that of Holliday junction branch migration complex subunit RuvA from Methylocella silvestris (strain DSM 15510 / CIP 108128 / LMG 27833 / NCIMB 13906 / BL2).